Here is a 449-residue protein sequence, read N- to C-terminus: LFQLELKNIPKSFTRLAQRFGPVFTLYVGSRRVVVVHGIKAVKEVLPGPQGRVLGQRRHPAFHAHRDRGIIFNNGPTWKDIRRFSLTTLRNYGMGKQGNESRIQREAHFLLEALRKTQGQPFDPTFLIGCAPCNVIADILFRKRFDYNDEKFLRLMYLFNENFQGLSCPWLQLYNNFPSLLHYLPGSHRKVMKNVAEIKEYVSERVKEHHQSLDPNCPRDLTDCLLVEMEKEKHSAERLYTMDGITVTVADLFFAGTETTSTTLRYGLLILMKYPEIEEKLHEEIDRVIGPSRIPAIKDRQEMPYMHAVVHEIQRFITLVPSNLPHEATRDTIFRGYIIPKGTVIVPTLDSVLYHNQEFPDPEKFKPEHLVDESGKFKYSDYFKPFSAGKRVCAGEGLARMELFLLLSAILQHFNLKPLVDPKDIDISPVNIGFGCIPPRFKLCVIPRS.

Substrate is bound at residue 254 to 259; it reads FAGTET. Heme is bound at residue Cys-393.

Belongs to the cytochrome P450 family. In terms of assembly, interacts with chaperones HSP70 and HSP90; this interaction is required for initial targeting to mitochondria. It depends on heme as a cofactor.

It is found in the endoplasmic reticulum membrane. The protein localises to the microsome membrane. It localises to the mitochondrion inner membrane. It catalyses the reaction an organic molecule + reduced [NADPH--hemoprotein reductase] + O2 = an alcohol + oxidized [NADPH--hemoprotein reductase] + H2O + H(+). It carries out the reaction (5Z,8Z,11Z)-eicosatrienoate + reduced [NADPH--hemoprotein reductase] + O2 = 19-hydroxy-(5Z,8Z,11Z)-eicosatrienoate + oxidized [NADPH--hemoprotein reductase] + H2O + H(+). The catalysed reaction is (5Z,8Z,11Z,14Z,17Z)-eicosapentaenoate + reduced [NADPH--hemoprotein reductase] + O2 = 19-hydroxy-(5Z,8Z,11Z,14Z,17Z)-eicosapentaenoate + oxidized [NADPH--hemoprotein reductase] + H2O + H(+). The enzyme catalyses (4Z,7Z,10Z,13Z,16Z,19Z)-docosahexaenoate + reduced [NADPH--hemoprotein reductase] + O2 = 21-hydroxy-(4Z,7Z,10Z,13Z,16Z,19Z)-docosahexaenoate + oxidized [NADPH--hemoprotein reductase] + H2O + H(+). It catalyses the reaction dodecanoate + reduced [NADPH--hemoprotein reductase] + O2 = 11-hydroxydodecanoate + oxidized [NADPH--hemoprotein reductase] + H2O + H(+). It carries out the reaction tetradecanoate + reduced [NADPH--hemoprotein reductase] + O2 = 13-hydroxytetradecanoate + oxidized [NADPH--hemoprotein reductase] + H2O + H(+). The catalysed reaction is 4-nitrophenol + NADPH + O2 + H(+) = 4-nitrocatechol + NADP(+) + H2O. Its pathway is lipid metabolism; fatty acid metabolism. The omega-1 hydroxylase activity is stimulated by cytochrome b5. A cytochrome P450 monooxygenase involved in the metabolism of fatty acids. Mechanistically, uses molecular oxygen inserting one oxygen atom into a substrate, and reducing the second into a water molecule, with two electrons provided by NADPH via cytochrome P450 reductase (NADPH--hemoprotein reductase). Catalyzes the hydroxylation of carbon-hydrogen bonds. Hydroxylates fatty acids specifically at the omega-1 position displaying the highest catalytic activity for saturated fatty acids. May be involved in the oxidative metabolism of xenobiotics. This chain is Cytochrome P450 2E1 (CYP2E1), found in Macaca fascicularis (Crab-eating macaque).